The following is a 100-amino-acid chain: Small ribosomal subunit protein uS14 (100 aa).

This sequence belongs to the universal ribosomal protein uS14 family. As to quaternary structure, part of the 30S ribosomal subunit. Contacts proteins S3 and S10.

Binds 16S rRNA, required for the assembly of 30S particles and may also be responsible for determining the conformation of the 16S rRNA at the A site. The sequence is that of Small ribosomal subunit protein uS14 from Gloeothece citriformis (strain PCC 7424) (Cyanothece sp. (strain PCC 7424)).